We begin with the raw amino-acid sequence, 145 residues long: Large ribosomal subunit protein uL15 (145 aa).

The segment at 1–58 (MFNLLKPKGASKRRKIVGRGPGSGLGKTSGRGQKGQKARNTSPRLGFEGGQTPLYRRL) is disordered. The span at 19-33 (RGPGSGLGKTSGRGQ) shows a compositional bias: gly residues.

It belongs to the universal ribosomal protein uL15 family. In terms of assembly, part of the 50S ribosomal subunit.

In terms of biological role, binds to the 23S rRNA. The polypeptide is Large ribosomal subunit protein uL15 (Borrelia garinii subsp. bavariensis (strain ATCC BAA-2496 / DSM 23469 / PBi) (Borreliella bavariensis)).